Consider the following 142-residue polypeptide: Nucleoside diphosphate kinase (142 aa).

Positions 9, 57, 85, 91, 102, and 112 each coordinate ATP. His115 (pros-phosphohistidine intermediate) is an active-site residue.

This sequence belongs to the NDK family. Homotetramer. Requires Mg(2+) as cofactor.

The protein localises to the cytoplasm. The enzyme catalyses a 2'-deoxyribonucleoside 5'-diphosphate + ATP = a 2'-deoxyribonucleoside 5'-triphosphate + ADP. It catalyses the reaction a ribonucleoside 5'-diphosphate + ATP = a ribonucleoside 5'-triphosphate + ADP. Its function is as follows. Major role in the synthesis of nucleoside triphosphates other than ATP. The ATP gamma phosphate is transferred to the NDP beta phosphate via a ping-pong mechanism, using a phosphorylated active-site intermediate. In Dehalococcoides mccartyi (strain CBDB1), this protein is Nucleoside diphosphate kinase.